The primary structure comprises 201 residues: Glycerol-3-phosphate acyltransferase (201 aa).

5 helical membrane passes run 5 to 25 (LLGA…FGVV), 55 to 75 (KMGV…ILVA), 88 to 108 (WVTA…WLGF), 118 to 138 (LGIF…GYAV), and 164 to 184 (TYGP…LIFL).

The protein belongs to the PlsY family. In terms of assembly, probably interacts with PlsX.

The protein localises to the cell inner membrane. The catalysed reaction is an acyl phosphate + sn-glycerol 3-phosphate = a 1-acyl-sn-glycero-3-phosphate + phosphate. It functions in the pathway lipid metabolism; phospholipid metabolism. Its function is as follows. Catalyzes the transfer of an acyl group from acyl-phosphate (acyl-PO(4)) to glycerol-3-phosphate (G3P) to form lysophosphatidic acid (LPA). This enzyme utilizes acyl-phosphate as fatty acyl donor, but not acyl-CoA or acyl-ACP. This Anaeromyxobacter sp. (strain K) protein is Glycerol-3-phosphate acyltransferase.